The primary structure comprises 206 residues: Dephospho-CoA kinase (206 aa).

The 197-residue stretch at 4-200 folds into the DPCK domain; that stretch reads IVALTGGIGS…AHYLQLASQF (197 aa). Position 12-17 (12-17) interacts with ATP; it reads GSGKST.

This sequence belongs to the CoaE family.

Its subcellular location is the cytoplasm. The enzyme catalyses 3'-dephospho-CoA + ATP = ADP + CoA + H(+). Its pathway is cofactor biosynthesis; coenzyme A biosynthesis; CoA from (R)-pantothenate: step 5/5. Functionally, catalyzes the phosphorylation of the 3'-hydroxyl group of dephosphocoenzyme A to form coenzyme A. In Shigella boydii serotype 4 (strain Sb227), this protein is Dephospho-CoA kinase.